The chain runs to 265 residues: Tryptophan synthase alpha chain (265 aa).

Active-site proton acceptor residues include glutamate 48 and aspartate 59.

The protein belongs to the TrpA family. As to quaternary structure, tetramer of two alpha and two beta chains.

The catalysed reaction is (1S,2R)-1-C-(indol-3-yl)glycerol 3-phosphate + L-serine = D-glyceraldehyde 3-phosphate + L-tryptophan + H2O. It functions in the pathway amino-acid biosynthesis; L-tryptophan biosynthesis; L-tryptophan from chorismate: step 5/5. In terms of biological role, the alpha subunit is responsible for the aldol cleavage of indoleglycerol phosphate to indole and glyceraldehyde 3-phosphate. This is Tryptophan synthase alpha chain from Ruthia magnifica subsp. Calyptogena magnifica.